Consider the following 344-residue polypeptide: Fructose-1,6-bisphosphatase, cytosolic (344 aa).

Residues Glu71, Glu100, Asp121, Leu123, and Asp124 each coordinate Mg(2+). Substrate contacts are provided by residues 124-127, Asn215, Tyr247, Tyr267, and Lys277; that span reads DGSS. Mg(2+) is bound at residue Glu283.

It belongs to the FBPase class 1 family. Requires Mg(2+) as cofactor.

Its subcellular location is the cytoplasm. The enzyme catalyses beta-D-fructose 1,6-bisphosphate + H2O = beta-D-fructose 6-phosphate + phosphate. This is Fructose-1,6-bisphosphatase, cytosolic from Oryza coarctata (Wild rice).